Here is a 435-residue protein sequence, read N- to C-terminus: Maltodextrin transport system permease protein MalC (435 aa).

10 helical membrane-spanning segments follow: residues 34–54, 73–93, 130–150, 199–219, 230–250, 263–283, 294–314, 338–358, 371–391, and 404–424; these read GFIFLGVTIVFVLYFLALATP, FMLIRGAFHLIFVIVYVLFYF, YLLIIPSYVAMTFAIIFPVIV, IIWALAASTLQIVIGIFTAII, IFGVIFLLPWAVPAFITILTF, TQVLPILAKFLPFLDGALIPW, LIMMQGWLGFPYIYVLTLGIL, NITFPMILAVAAPTLISQYTF, GGGPGSVGGGAGSTDILISWI, and MAAAVTLIISIIVISISMIAF. Positions 195-423 constitute an ABC transmembrane type-1 domain; it reads LSWTIIWALA…IIVISISMIA (229 aa).

Belongs to the binding-protein-dependent transport system permease family. MalFG subfamily.

The protein localises to the cell membrane. Part of the binding-protein-dependent transport system for maltodextrin; probably responsible for the translocation of the substrate across the membrane. The chain is Maltodextrin transport system permease protein MalC (malC) from Streptococcus pneumoniae serotype 4 (strain ATCC BAA-334 / TIGR4).